Here is an 86-residue protein sequence, read N- to C-terminus: MKSIVFVALFGLALLAVVCSASEDAHKELLKEVVRAMVVDKTDAVQAEERECRWYLGGCSQDGDCCKHLQCHSNYEWCIWDGTFSK.

Residues 1-21 (MKSIVFVALFGLALLAVVCSA) form the signal peptide. The propeptide occupies 22–50 (SEDAHKELLKEVVRAMVVDKTDAVQAEER). Disulfide bonds link cysteine 52/cysteine 66, cysteine 59/cysteine 71, and cysteine 65/cysteine 78.

The protein belongs to the neurotoxin 10 (Hwtx-1) family. 17 (Hntx-9) subfamily. In terms of tissue distribution, expressed by the venom gland.

The protein resides in the secreted. Ion channel inhibitor. This Cyriopagopus hainanus (Chinese bird spider) protein is Omega-theraphotoxin-Hhn1f 1.